Consider the following 265-residue polypeptide: Transcription factor LBX1b (265 aa).

Positions 121-180 (RRKSRTAFTNHQLYELEKRFLHQKYLSPADRDQIAHQLGLTNAQVITWFQNRRAKLKRDL) form a DNA-binding region, homeobox.

The protein resides in the nucleus. Transcription factor required for the development of hypaxial muscles. The chain is Transcription factor LBX1b from Danio rerio (Zebrafish).